Consider the following 130-residue polypeptide: Small ribosomal subunit protein uS9 (130 aa).

Belongs to the universal ribosomal protein uS9 family.

The sequence is that of Small ribosomal subunit protein uS9 from Phytoplasma australiense.